Here is a 596-residue protein sequence, read N- to C-terminus: Elongation factor 4 (596 aa).

The region spanning 2 to 184 (RNIRNFSIIA…AIVHRIPPPK (183 aa)) is the tr-type G domain. GTP contacts are provided by residues 14 to 19 (DHGKST) and 131 to 134 (NKID).

This sequence belongs to the TRAFAC class translation factor GTPase superfamily. Classic translation factor GTPase family. LepA subfamily.

It localises to the cell inner membrane. The catalysed reaction is GTP + H2O = GDP + phosphate + H(+). Its function is as follows. Required for accurate and efficient protein synthesis under certain stress conditions. May act as a fidelity factor of the translation reaction, by catalyzing a one-codon backward translocation of tRNAs on improperly translocated ribosomes. Back-translocation proceeds from a post-translocation (POST) complex to a pre-translocation (PRE) complex, thus giving elongation factor G a second chance to translocate the tRNAs correctly. Binds to ribosomes in a GTP-dependent manner. The polypeptide is Elongation factor 4 (Xanthomonas euvesicatoria pv. vesicatoria (strain 85-10) (Xanthomonas campestris pv. vesicatoria)).